A 461-amino-acid polypeptide reads, in one-letter code: Phosphomethylpyrimidine synthase (461 aa).

Substrate-binding positions include N80, M109, Y138, H173, 193 to 195 (SRG), 234 to 237 (DGLR), and E273. Position 277 (H277) interacts with Zn(2+). A substrate-binding site is contributed by Y300. H341 lines the Zn(2+) pocket. Positions 421, 424, and 429 each coordinate [4Fe-4S] cluster.

The protein belongs to the ThiC family. [4Fe-4S] cluster is required as a cofactor.

It catalyses the reaction 5-amino-1-(5-phospho-beta-D-ribosyl)imidazole + S-adenosyl-L-methionine = 4-amino-2-methyl-5-(phosphooxymethyl)pyrimidine + CO + 5'-deoxyadenosine + formate + L-methionine + 3 H(+). It functions in the pathway cofactor biosynthesis; thiamine diphosphate biosynthesis. Functionally, catalyzes the synthesis of the hydroxymethylpyrimidine phosphate (HMP-P) moiety of thiamine from aminoimidazole ribotide (AIR) in a radical S-adenosyl-L-methionine (SAM)-dependent reaction. The polypeptide is Phosphomethylpyrimidine synthase (Solibacter usitatus (strain Ellin6076)).